The primary structure comprises 80 residues: UPF0154 protein SZO_03240 (80 aa).

A helical membrane pass occupies residues 4–24 (AIWILLIIVALTAGLFGGIFI).

Belongs to the UPF0154 family.

The protein localises to the cell membrane. The protein is UPF0154 protein SZO_03240 of Streptococcus equi subsp. zooepidemicus (strain H70).